Reading from the N-terminus, the 326-residue chain is Glycerol-3-phosphate dehydrogenase [NAD(P)+] (326 aa).

NADPH contacts are provided by tryptophan 13, arginine 33, and lysine 107. Residues lysine 107, glycine 135, and serine 137 each coordinate sn-glycerol 3-phosphate. Alanine 139 serves as a coordination point for NADPH. Lysine 190, aspartate 243, serine 253, arginine 254, and asparagine 255 together coordinate sn-glycerol 3-phosphate. Lysine 190 (proton acceptor) is an active-site residue. Residue arginine 254 participates in NADPH binding. Residues leucine 273 and glutamate 275 each coordinate NADPH.

The protein belongs to the NAD-dependent glycerol-3-phosphate dehydrogenase family.

It is found in the cytoplasm. The enzyme catalyses sn-glycerol 3-phosphate + NAD(+) = dihydroxyacetone phosphate + NADH + H(+). It carries out the reaction sn-glycerol 3-phosphate + NADP(+) = dihydroxyacetone phosphate + NADPH + H(+). It functions in the pathway membrane lipid metabolism; glycerophospholipid metabolism. In terms of biological role, catalyzes the reduction of the glycolytic intermediate dihydroxyacetone phosphate (DHAP) to sn-glycerol 3-phosphate (G3P), the key precursor for phospholipid synthesis. The protein is Glycerol-3-phosphate dehydrogenase [NAD(P)+] of Brucella abortus (strain 2308).